The following is a 177-amino-acid chain: Large ribosomal subunit protein uL6 (177 aa).

Belongs to the universal ribosomal protein uL6 family. Part of the 50S ribosomal subunit.

Functionally, this protein binds to the 23S rRNA, and is important in its secondary structure. It is located near the subunit interface in the base of the L7/L12 stalk, and near the tRNA binding site of the peptidyltransferase center. The chain is Large ribosomal subunit protein uL6 from Pseudomonas putida (strain ATCC 700007 / DSM 6899 / JCM 31910 / BCRC 17059 / LMG 24140 / F1).